Reading from the N-terminus, the 334-residue chain is MSDVMTANRRSFLAEDGKETIVRTDDLVRDFDLGHRPEGGRLVLRAVDKVSLTIRRGETLGLVGESGSGKSTIGRMLVGLLPYTSGNIELFGQKIEPRAKAAAWKPLRRRVQFVFQDPHAALNPRMRVGTAIAEPLDVAGNLTRKERSARVDELMELVGLPTSFARRFPHEFSGGQRQRIVIARALALNPEILVCDEAVASLDVSMQAQIVNLLKDLQDQLGLSYLFIAHDLAVVRAVSHRVAVLYAGQIVETGPRTALYSDPLHPYSRALLDSVPRARRGAPRSIIAGEVPSLLNKPKGCAFCPRCPKAMDICRDVPPPLRVIGDREVACHLY.

The region spanning 22–272 (VRTDDLVRDF…PLHPYSRALL (251 aa)) is the ABC transporter domain. Residue 64 to 71 (GESGSGKS) coordinates ATP.

The protein belongs to the ABC transporter superfamily. In terms of assembly, the complex is composed of two ATP-binding proteins (BAB2_1052 and BAB2_1053), two transmembrane proteins (BAB2_1050 and BAB2_1051) and a solute-binding protein (BAB2_1049).

The protein localises to the cell inner membrane. Its function is as follows. Probably part of an ABC transporter complex that could be involved in peptide import. Probably responsible for energy coupling to the transport system. The polypeptide is Putative peptide import ATP-binding protein BAB2_1053 (Brucella abortus (strain 2308)).